The following is a 132-amino-acid chain: Small ribosomal subunit protein uS8 (132 aa).

The protein belongs to the universal ribosomal protein uS8 family. Part of the 30S ribosomal subunit. Contacts proteins S5 and S12.

In terms of biological role, one of the primary rRNA binding proteins, it binds directly to 16S rRNA central domain where it helps coordinate assembly of the platform of the 30S subunit. This Mycobacterium avium (strain 104) protein is Small ribosomal subunit protein uS8.